A 379-amino-acid polypeptide reads, in one-letter code: MTIVRKTHPIMKMVNHAFIDLPAPSNISGWWNFGSLLGLCLIIQIASGLFLAMHYTPDTLTAFSSVTHICRDVNYGWLIRYMHANGASLFFICLYLHIGRGIYYGSYSYMETWNIGILLLFRTMATAFMGYVLPWGQMSFWGATVITNLLSAIPYIGTDLVEWIWGGFSVDKATLNRFFAFHFILPFIIAAMAMVHLLFLHETGSNNPLGIPSDCDKIPFHPYYTTKDFLGIVLLLAFFFTLVLFFPDLLGDPDNYSPANPLSTPPHIKPEWYFLFAYAILRSIPNKMGGVIALILSILILALFPHIQTGKQRSLMFRPISQFLFWLLVSDVLVLTWIGGQPVEPPFIIIGQIASVLYFTFILAFLPIAGLNENKMLKW.

4 helical membrane passes run 33 to 53 (FGSLLGLCLIIQIASGLFLAM), 77 to 98 (WLIRYMHANGASLFFICLYLHI), 113 to 133 (WNIGILLLFRTMATAFMGYVL), and 178 to 198 (FFAFHFILPFIIAAMAMVHLL). Heme b is bound by residues His83 and His97. Heme b contacts are provided by His182 and His196. An a ubiquinone-binding site is contributed by His201. 4 helical membrane-spanning segments follow: residues 226 to 246 (TKDFLGIVLLLAFFFTLVLFF), 288 to 308 (MGGVIALILSILILALFPHIQ), 320 to 340 (ISQFLFWLLVSDVLVLTWIGG), and 347 to 367 (FIIIGQIASVLYFTFILAFLP).

This sequence belongs to the cytochrome b family. The cytochrome bc1 complex contains 11 subunits: 3 respiratory subunits (MT-CYB, CYC1 and UQCRFS1), 2 core proteins (UQCRC1 and UQCRC2) and 6 low-molecular weight proteins (UQCRH/QCR6, UQCRB/QCR7, UQCRQ/QCR8, UQCR10/QCR9, UQCR11/QCR10 and a cleavage product of UQCRFS1). This cytochrome bc1 complex then forms a dimer. The cofactor is heme b.

Its subcellular location is the mitochondrion inner membrane. Functionally, component of the ubiquinol-cytochrome c reductase complex (complex III or cytochrome b-c1 complex) that is part of the mitochondrial respiratory chain. The b-c1 complex mediates electron transfer from ubiquinol to cytochrome c. Contributes to the generation of a proton gradient across the mitochondrial membrane that is then used for ATP synthesis. In Dipodomys ordii (Ord's kangaroo rat), this protein is Cytochrome b (MT-CYB).